The sequence spans 305 residues: Protein ORANGE, chloroplastic (305 aa).

Residues methionine 1 to serine 54 constitute a chloroplast transit peptide. 2 helical membrane-spanning segments follow: residues valine 144–alanine 164 and isoleucine 197–valine 217. The interval valine 206–histidine 297 is CR-type-like. The stretch at cysteine 228–glycine 235 is one CXXCXGXG motif repeat. One copy of the CXXCXXXG motif repeat lies at cysteine 239 to glycine 246. Residues cysteine 272–glycine 279 form a CXXCXGXG motif repeat. One copy of the CXXCXXXG motif repeat lies at cysteine 283–glycine 290.

Belongs to the orange-like family. Interacts with ERF1-2. As to expression, expressed in young leaves, curds and flower buds.

The protein localises to the plastid. It is found in the chloroplast membrane. The protein resides in the nucleus. Its function is as follows. Involved in chromoplast differentiation. Is associated with a cellular process that triggers the differentiation of pro-plastids or other non-colored plastids into chromoplasts for carotenoid accumulation. Associated with carotenoid accumulation in de-etiolated cotyledons. Controls leaf petiole elongation by suppressing the expression of ERF1 genes. The protein is Protein ORANGE, chloroplastic of Brassica oleracea var. botrytis (Cauliflower).